The primary structure comprises 48 residues: Large ribosomal subunit protein eL40 (48 aa).

Belongs to the eukaryotic ribosomal protein eL40 family.

The protein is Large ribosomal subunit protein eL40 of Methanoculleus marisnigri (strain ATCC 35101 / DSM 1498 / JR1).